A 417-amino-acid chain; its full sequence is Serine hydroxymethyltransferase (417 aa).

(6S)-5,6,7,8-tetrahydrofolate-binding positions include L121 and 125 to 127 (GHL). N6-(pyridoxal phosphate)lysine is present on K229. 355-357 (SPF) serves as a coordination point for (6S)-5,6,7,8-tetrahydrofolate.

The protein belongs to the SHMT family. Homodimer. Pyridoxal 5'-phosphate serves as cofactor.

The protein resides in the cytoplasm. The catalysed reaction is (6R)-5,10-methylene-5,6,7,8-tetrahydrofolate + glycine + H2O = (6S)-5,6,7,8-tetrahydrofolate + L-serine. It functions in the pathway one-carbon metabolism; tetrahydrofolate interconversion. The protein operates within amino-acid biosynthesis; glycine biosynthesis; glycine from L-serine: step 1/1. Its function is as follows. Catalyzes the reversible interconversion of serine and glycine with tetrahydrofolate (THF) serving as the one-carbon carrier. This reaction serves as the major source of one-carbon groups required for the biosynthesis of purines, thymidylate, methionine, and other important biomolecules. Also exhibits THF-independent aldolase activity toward beta-hydroxyamino acids, producing glycine and aldehydes, via a retro-aldol mechanism. The protein is Serine hydroxymethyltransferase of Shewanella frigidimarina (strain NCIMB 400).